An 800-amino-acid polypeptide reads, in one-letter code: DNA topoisomerase 4 subunit A (800 aa).

In terms of domain architecture, Topo IIA-type catalytic spans 31–495 (LPDVRDGLKP…EIEEIKIDKE (465 aa)). Tyrosine 119 (O-(5'-phospho-DNA)-tyrosine intermediate) is an active-site residue.

The protein belongs to the type II topoisomerase GyrA/ParC subunit family. ParC type 2 subfamily. As to quaternary structure, heterotetramer composed of ParC and ParE.

The protein resides in the cell membrane. The enzyme catalyses ATP-dependent breakage, passage and rejoining of double-stranded DNA.. Topoisomerase IV is essential for chromosome segregation. It relaxes supercoiled DNA. Performs the decatenation events required during the replication of a circular DNA molecule. The sequence is that of DNA topoisomerase 4 subunit A from Staphylococcus aureus (strain Mu50 / ATCC 700699).